The primary structure comprises 115 residues: Large ribosomal subunit protein bL19 (115 aa).

The protein belongs to the bacterial ribosomal protein bL19 family.

In terms of biological role, this protein is located at the 30S-50S ribosomal subunit interface and may play a role in the structure and function of the aminoacyl-tRNA binding site. The sequence is that of Large ribosomal subunit protein bL19 from Nitrosococcus oceani (strain ATCC 19707 / BCRC 17464 / JCM 30415 / NCIMB 11848 / C-107).